The following is a 435-amino-acid chain: Bifunctional protein GlmU (435 aa).

The pyrophosphorylase stretch occupies residues 1-224; the sequence is MNDTSIIILA…EQNFMGINDK (224 aa). Residues 9–12, Lys23, Gln75, and 82–83 contribute to the UDP-N-acetyl-alpha-D-glucosamine site; these read LAAG and GT. Asp103 provides a ligand contact to Mg(2+). Residues Gly136, Glu150, Asn165, and Asn222 each contribute to the UDP-N-acetyl-alpha-D-glucosamine site. Position 222 (Asn222) interacts with Mg(2+). Positions 225-245 are linker; sequence FQLSVAEKIMQDEIKQDLMKA. Residues 246-435 are N-acetyltransferase; that stretch reads GVLMRLPESI…KFFGKNNAEK (190 aa). Residues Arg309 and Lys326 each coordinate UDP-N-acetyl-alpha-D-glucosamine. Residue His337 is the Proton acceptor of the active site. The UDP-N-acetyl-alpha-D-glucosamine site is built by Tyr340 and Asn351. Residues 360–361, Ser379, Ala397, and Arg414 each bind acetyl-CoA; that span reads NY.

In the N-terminal section; belongs to the N-acetylglucosamine-1-phosphate uridyltransferase family. This sequence in the C-terminal section; belongs to the transferase hexapeptide repeat family. In terms of assembly, homotrimer. Requires Mg(2+) as cofactor.

It is found in the cytoplasm. The enzyme catalyses alpha-D-glucosamine 1-phosphate + acetyl-CoA = N-acetyl-alpha-D-glucosamine 1-phosphate + CoA + H(+). It carries out the reaction N-acetyl-alpha-D-glucosamine 1-phosphate + UTP + H(+) = UDP-N-acetyl-alpha-D-glucosamine + diphosphate. It functions in the pathway nucleotide-sugar biosynthesis; UDP-N-acetyl-alpha-D-glucosamine biosynthesis; N-acetyl-alpha-D-glucosamine 1-phosphate from alpha-D-glucosamine 6-phosphate (route II): step 2/2. The protein operates within nucleotide-sugar biosynthesis; UDP-N-acetyl-alpha-D-glucosamine biosynthesis; UDP-N-acetyl-alpha-D-glucosamine from N-acetyl-alpha-D-glucosamine 1-phosphate: step 1/1. Its pathway is bacterial outer membrane biogenesis; LPS lipid A biosynthesis. In terms of biological role, catalyzes the last two sequential reactions in the de novo biosynthetic pathway for UDP-N-acetylglucosamine (UDP-GlcNAc). The C-terminal domain catalyzes the transfer of acetyl group from acetyl coenzyme A to glucosamine-1-phosphate (GlcN-1-P) to produce N-acetylglucosamine-1-phosphate (GlcNAc-1-P), which is converted into UDP-GlcNAc by the transfer of uridine 5-monophosphate (from uridine 5-triphosphate), a reaction catalyzed by the N-terminal domain. The protein is Bifunctional protein GlmU of Campylobacter curvus (strain 525.92).